Consider the following 233-residue polypeptide: NAD-dependent protein deacylase (233 aa).

A Deacetylase sirtuin-type domain is found at 1–230; the sequence is MKNIMILSGA…ALDIENFMKD (230 aa). NAD(+) is bound at residue 9–28; it reads GAGLSAPSGLKTFRDNDGLW. Residues Y53 and R56 each coordinate substrate. NAD(+) is bound at residue 88-91; that stretch reads QNVD. H106 acts as the Proton acceptor in catalysis. 4 residues coordinate Zn(2+): C114, C117, C133, and C136. NAD(+) contacts are provided by residues 172-174 and I213; that span reads GTS.

This sequence belongs to the sirtuin family. Class III subfamily. It depends on Zn(2+) as a cofactor.

Its subcellular location is the cytoplasm. The catalysed reaction is N(6)-acetyl-L-lysyl-[protein] + NAD(+) + H2O = 2''-O-acetyl-ADP-D-ribose + nicotinamide + L-lysyl-[protein]. The enzyme catalyses N(6)-succinyl-L-lysyl-[protein] + NAD(+) + H2O = 2''-O-succinyl-ADP-D-ribose + nicotinamide + L-lysyl-[protein]. Its function is as follows. NAD-dependent lysine deacetylase and desuccinylase that specifically removes acetyl and succinyl groups on target proteins. Modulates the activities of several proteins which are inactive in their acylated form. The protein is NAD-dependent protein deacylase of Campylobacter jejuni (strain RM1221).